A 213-amino-acid polypeptide reads, in one-letter code: dITP/XTP pyrophosphatase (213 aa).

Residue 7-12 (TSNLDK) coordinates substrate. The Proton acceptor role is filled by Asp74. Residue Asp74 coordinates Mg(2+). Substrate contacts are provided by residues Ser75, 165 to 168 (FGYD), Lys188, and 193 to 194 (HR).

Belongs to the HAM1 NTPase family. In terms of assembly, homodimer. It depends on Mg(2+) as a cofactor.

The enzyme catalyses XTP + H2O = XMP + diphosphate + H(+). It catalyses the reaction dITP + H2O = dIMP + diphosphate + H(+). It carries out the reaction ITP + H2O = IMP + diphosphate + H(+). Its function is as follows. Pyrophosphatase that catalyzes the hydrolysis of nucleoside triphosphates to their monophosphate derivatives, with a high preference for the non-canonical purine nucleotides XTP (xanthosine triphosphate), dITP (deoxyinosine triphosphate) and ITP. Seems to function as a house-cleaning enzyme that removes non-canonical purine nucleotides from the nucleotide pool, thus preventing their incorporation into DNA/RNA and avoiding chromosomal lesions. In Campylobacter concisus (strain 13826), this protein is dITP/XTP pyrophosphatase.